We begin with the raw amino-acid sequence, 256 residues long: 3-deoxy-manno-octulosonate cytidylyltransferase (256 aa).

Belongs to the KdsB family.

It is found in the cytoplasm. The enzyme catalyses 3-deoxy-alpha-D-manno-oct-2-ulosonate + CTP = CMP-3-deoxy-beta-D-manno-octulosonate + diphosphate. Its pathway is nucleotide-sugar biosynthesis; CMP-3-deoxy-D-manno-octulosonate biosynthesis; CMP-3-deoxy-D-manno-octulosonate from 3-deoxy-D-manno-octulosonate and CTP: step 1/1. It participates in bacterial outer membrane biogenesis; lipopolysaccharide biosynthesis. Functionally, activates KDO (a required 8-carbon sugar) for incorporation into bacterial lipopolysaccharide in Gram-negative bacteria. The sequence is that of 3-deoxy-manno-octulosonate cytidylyltransferase from Histophilus somni (strain 129Pt) (Haemophilus somnus).